The chain runs to 425 residues: Ribosome biogenesis protein WDR12 homolog (425 aa).

Positions 13-94 (LQLHLITKQK…EDTVELEYVE (82 aa)) are ubiquitin-like (UBL) domain. WD repeat units follow at residues 106 to 143 (LHDDWVSAVEARDNWILTGCYDNTLNLWTTKGKHKLTI), 145 to 187 (GHIA…NSVE), 194 to 233 (GHERGVDCIAANGSKTKMATGSWDTMLKIWSTDVRSGGGD), 258 to 296 (GHRECISGVQWIDDNTLVTSSWDHTIKIWDLALNGIKSE), 298 to 337 (SGNKSFFDLSYSKLNGLIITASPDKNLRLYDPKSNQGTLV), 343 to 383 (GHTQ…APIF), and 387 to 425 (GHEDKVLACDWSNPRFILSGGSDNSVRVFKSKIAIGGEK). The interval 227-247 (VRSGGGDSEPSTSKRQKLDQG) is disordered.

The protein belongs to the WD repeat WDR12/YTM1 family.

It localises to the nucleus. Its subcellular location is the nucleolus. The protein resides in the nucleoplasm. In terms of biological role, required for maturation of ribosomal RNAs and formation of the large ribosomal subunit. This chain is Ribosome biogenesis protein WDR12 homolog, found in Culex quinquefasciatus (Southern house mosquito).